The chain runs to 241 residues: Fatty acid metabolism regulator protein (241 aa).

The 69-residue stretch at Gln-11–Ile-79 folds into the HTH gntR-type domain. Positions Glu-39–Gln-58 form a DNA-binding region, H-T-H motif.

Homodimer.

It localises to the cytoplasm. Its function is as follows. Multifunctional regulator of fatty acid metabolism. This Haemophilus influenzae (strain 86-028NP) protein is Fatty acid metabolism regulator protein.